The primary structure comprises 96 residues: Co-chaperonin GroES (96 aa).

The protein belongs to the GroES chaperonin family. As to quaternary structure, heptamer of 7 subunits arranged in a ring. Interacts with the chaperonin GroEL.

Its subcellular location is the cytoplasm. Functionally, together with the chaperonin GroEL, plays an essential role in assisting protein folding. The GroEL-GroES system forms a nano-cage that allows encapsulation of the non-native substrate proteins and provides a physical environment optimized to promote and accelerate protein folding. GroES binds to the apical surface of the GroEL ring, thereby capping the opening of the GroEL channel. The sequence is that of Co-chaperonin GroES from Herminiimonas arsenicoxydans.